The sequence spans 578 residues: Kelch-like protein 30 (578 aa).

The region spanning 33-100 (ADVTLLVGGR…VYTGRLTITQ (68 aa)) is the BTB domain. A BACK domain is found at 153–255 (KAWAFLRENF…EACRAALSQG (103 aa)). Kelch repeat units lie at residues 270 to 326 (VLVV…ALNN), 327 to 377 (NIYV…ALNG), 378 to 422 (EIYV…GCRG), 424 to 471 (LYLV…ALHG), 473 to 513 (LYLI…PLGD), and 514 to 563 (ALYV…TVFL).

In Homo sapiens (Human), this protein is Kelch-like protein 30 (KLHL30).